A 242-amino-acid polypeptide reads, in one-letter code: Segregation and condensation protein A (242 aa).

The protein belongs to the ScpA family. Component of a cohesin-like complex composed of ScpA, ScpB and the Smc homodimer, in which ScpA and ScpB bind to the head domain of Smc. The presence of the three proteins is required for the association of the complex with DNA.

It is found in the cytoplasm. Participates in chromosomal partition during cell division. May act via the formation of a condensin-like complex containing Smc and ScpB that pull DNA away from mid-cell into both cell halves. The chain is Segregation and condensation protein A from Streptococcus pneumoniae (strain Taiwan19F-14).